The primary structure comprises 139 residues: von Hippel-Lindau-like protein (139 aa).

Residues 1–22 (MPWRAGNGVGLEAQAGTQEAGP) are disordered. A beta-domain region spans residues 54–135 (SRIIICNHSP…GQPVFANITL (82 aa)).

This sequence belongs to the VHL family. In terms of assembly, interacts via the beta domain with the ODD domain of HIF1A. This interaction is independent of prolyl hydroxylation of HIF1A. In terms of tissue distribution, abundantly expressed in the placenta.

In terms of biological role, functions as a dominant-negative VHL to serve as a protector of HIFalpha. The protein is von Hippel-Lindau-like protein (VHLL) of Homo sapiens (Human).